Consider the following 344-residue polypeptide: HTH-type transcriptional repressor MelR (344 aa).

The HTH lacI-type domain maps to 2–58 (VRIKDIALKAKVSSATVSRILNEDESLSVAGETRQRVINIAEELGYQTVAKRRKSRG). The segment at residues 4–23 (IKDIALKAKVSSATVSRILN) is a DNA-binding region (H-T-H motif).

Its subcellular location is the cytoplasm. Its function is as follows. Represses the melibiose operon melREDCA in the absence of melibiose or raffinose. Binds to two binding sites at the promoter region of the operon. This is HTH-type transcriptional repressor MelR from Bacillus subtilis (strain 168).